Here is a 466-residue protein sequence, read N- to C-terminus: Asparagine--tRNA ligase (466 aa).

It belongs to the class-II aminoacyl-tRNA synthetase family. As to quaternary structure, homodimer.

It localises to the cytoplasm. The catalysed reaction is tRNA(Asn) + L-asparagine + ATP = L-asparaginyl-tRNA(Asn) + AMP + diphosphate + H(+). The polypeptide is Asparagine--tRNA ligase (Photorhabdus laumondii subsp. laumondii (strain DSM 15139 / CIP 105565 / TT01) (Photorhabdus luminescens subsp. laumondii)).